The chain runs to 172 residues: Transmembrane protein 91 (172 aa).

Disordered stretches follow at residues M1 to L31 and P55 to G83. The Extracellular portion of the chain corresponds to M1–G97. Positions V69–W81 are enriched in acidic residues. The helical transmembrane segment at L98–A118 threads the bilayer. Over Q119–R139 the chain is Cytoplasmic. The chain crosses the membrane as a helical span at residues A140 to V160. Residues T161–P172 lie on the Extracellular side of the membrane.

It belongs to the CD225/Dispanin family.

The protein localises to the membrane. This is Transmembrane protein 91 (TMEM91) from Homo sapiens (Human).